Here is a 251-residue protein sequence, read N- to C-terminus: 2-C-methyl-D-erythritol 4-phosphate cytidylyltransferase (251 aa).

It belongs to the IspD/TarI cytidylyltransferase family. IspD subfamily.

The enzyme catalyses 2-C-methyl-D-erythritol 4-phosphate + CTP + H(+) = 4-CDP-2-C-methyl-D-erythritol + diphosphate. Its pathway is isoprenoid biosynthesis; isopentenyl diphosphate biosynthesis via DXP pathway; isopentenyl diphosphate from 1-deoxy-D-xylulose 5-phosphate: step 2/6. In terms of biological role, catalyzes the formation of 4-diphosphocytidyl-2-C-methyl-D-erythritol from CTP and 2-C-methyl-D-erythritol 4-phosphate (MEP). The sequence is that of 2-C-methyl-D-erythritol 4-phosphate cytidylyltransferase from Cupriavidus pinatubonensis (strain JMP 134 / LMG 1197) (Cupriavidus necator (strain JMP 134)).